A 622-amino-acid chain; its full sequence is Chaperone protein HscA homolog (622 aa).

Belongs to the heat shock protein 70 family.

Chaperone involved in the maturation of iron-sulfur cluster-containing proteins. Has a low intrinsic ATPase activity which is markedly stimulated by HscB. This is Chaperone protein HscA homolog from Methylobacillus flagellatus (strain ATCC 51484 / DSM 6875 / VKM B-1610 / KT).